Consider the following 1370-residue polypeptide: Reverse gyrase 1 (1370 aa).

The segment at 6–47 (AASRGVYRYLCPNCGGPNSEERLSRGLPCPRCLPRLPRKGVS) adopts an RG N-terminal-type zinc-finger fold. Residues cysteine 16, cysteine 19, cysteine 34, and cysteine 37 each coordinate Zn(2+). Residues glutamine 95 and 112 to 119 (APTGVGKT) each bind ATP. Positions 99–287 (AKRLARGDSF…RKKLLEVKRR (189 aa)) constitute a Helicase ATP-binding domain. The DEAD box motif lies at 220–223 (DDVD). The topoisomerase I stretch occupies residues 643–1370 (ELVRTALLVV…VSRVWGAGVG (728 aa)). Residues 647 to 825 (TALLVVESPN…DIKRLEFHEV (179 aa)) enclose the Toprim domain. Glutamate 653 provides a ligand contact to Mg(2+). The RG C-terminal-type zinc-finger motif lies at 744 to 772 (IKRCLDCGYQFVDEASRCPRCGSELIRNS). Positions 747, 750, 761, and 764 each coordinate Zn(2+). Mg(2+) is bound at residue aspartate 794. The 483-residue stretch at 841 to 1323 (DDNLVDAQVV…SVFNEISDLA (483 aa)) folds into the Topo IA-type catalytic domain. Tyrosine 1028 (O-(5'-phospho-DNA)-tyrosine intermediate) is an active-site residue.

In the N-terminal section; belongs to the DEAD box helicase family. DDVD subfamily. This sequence in the C-terminal section; belongs to the type IA topoisomerase family. In terms of assembly, monomer. Zn(2+) serves as cofactor. The cofactor is Mg(2+).

It is found in the cytoplasm. It carries out the reaction ATP + H2O = ADP + phosphate + H(+). Functionally, modifies the topological state of DNA by introducing positive supercoils in an ATP-dependent process, increasing the linking number in steps of +1. Binds to single-stranded DNA, transiently cleaves and then rejoins the ends, introducing a positive supercoil in the process. The scissile phosphodiester is attacked by the catalytic tyrosine of the enzyme, resulting in the formation of a DNA-(5'-phosphotyrosyl)-enzyme intermediate. Probably involved in rewinding DNA strands in regions of the chromosome that have opened up to allow replication, transcription, DNA repair and/or for DNA protection. This chain is Reverse gyrase 1, found in Aeropyrum pernix (strain ATCC 700893 / DSM 11879 / JCM 9820 / NBRC 100138 / K1).